Here is a 79-residue protein sequence, read N- to C-terminus: Small ribosomal subunit protein bS18 (79 aa).

It belongs to the bacterial ribosomal protein bS18 family. Part of the 30S ribosomal subunit. Forms a tight heterodimer with protein bS6.

In terms of biological role, binds as a heterodimer with protein bS6 to the central domain of the 16S rRNA, where it helps stabilize the platform of the 30S subunit. This chain is Small ribosomal subunit protein bS18, found in Onion yellows phytoplasma (strain OY-M).